The sequence spans 316 residues: Melanocyte-stimulating hormone receptor (316 aa).

Residues 1 to 37 (MAVQGSQRRLLGSLNSTPTAIPQLGLAANQTGARCLE) lie on the Extracellular side of the membrane. Asparagine 29 carries an N-linked (GlcNAc...) asparagine glycan. The chain crosses the membrane as a helical span at residues 38–63 (VSIPDGLFLSLGLVSLVENVLVVATI). Over 64 to 72 (AKNRNLHSP) the chain is Cytoplasmic. The chain crosses the membrane as a helical span at residues 73 to 93 (MYCFICCLALSDLLVSGSNVV). Over 94 to 117 (DTLLLLLEAGALAARAAVLQQLDN) the chain is Extracellular. A helical membrane pass occupies residues 118-139 (VIDVITCSSMLSSLCFLGAIAV). At 140 to 162 (DRYISIFYALRYRSIVTLPRARR) the chain is on the cytoplasmic side. The helical transmembrane segment at 163–182 (AVAAIWVASVLFSTLFIAYY) threads the bilayer. Topologically, residues 183 to 190 (DHTAVLLC) are extracellular. The chain crosses the membrane as a helical span at residues 191-210 (LVVFFLAMLVLMAVLYVHML). Residues 211-239 (ARACQHAQGIARLHKRQRPVHKGFGLKGP) are Cytoplasmic-facing. The chain crosses the membrane as a helical span at residues 240–265 (VTLTILLGIFFLCWGPFFLHLTLIVL). Residues 266-278 (CPEHPTCGCIFKN) are Extracellular-facing. A helical transmembrane segment spans residues 279–299 (FNLFLALIICNAIIDPLIYAF). Over 300 to 316 (HSQELRRTLKEVLTCSW) the chain is Cytoplasmic. Cysteine 314 carries S-palmitoyl cysteine lipidation.

This sequence belongs to the G-protein coupled receptor 1 family. Interacts with MGRN1, but does not undergo MGRN1-mediated ubiquitination; this interaction competes with GNAS-binding and thus inhibits agonist-induced cAMP production. Interacts with OPN3; the interaction results in a decrease in MC1R-mediated cAMP signaling and ultimately a decrease in melanin production in melanocytes.

It localises to the cell membrane. Functionally, receptor for MSH (alpha, beta and gamma) and ACTH. The activity of this receptor is mediated by G proteins which activate adenylate cyclase. Mediates melanogenesis, the production of eumelanin (black/brown) and phaeomelanin (red/yellow), via regulation of cAMP signaling in melanocytes. The protein is Melanocyte-stimulating hormone receptor (MC1R) of Gorilla gorilla gorilla (Western lowland gorilla).